A 689-amino-acid chain; its full sequence is DNA ligase (689 aa).

NAD(+) contacts are provided by residues 51–55 (DSEYD), 100–101 (SL), and Glu129. Lys131 serves as the catalytic N6-AMP-lysine intermediate. Residues Arg152, Glu189, Lys308, and Lys332 each coordinate NAD(+). 4 residues coordinate Zn(2+): Cys426, Cys429, Cys444, and Cys450. In terms of domain architecture, BRCT spans 609–689 (ADEQPLKGQT…ELLALLAANR (81 aa)).

This sequence belongs to the NAD-dependent DNA ligase family. LigA subfamily. Mg(2+) is required as a cofactor. It depends on Mn(2+) as a cofactor.

It catalyses the reaction NAD(+) + (deoxyribonucleotide)n-3'-hydroxyl + 5'-phospho-(deoxyribonucleotide)m = (deoxyribonucleotide)n+m + AMP + beta-nicotinamide D-nucleotide.. DNA ligase that catalyzes the formation of phosphodiester linkages between 5'-phosphoryl and 3'-hydroxyl groups in double-stranded DNA using NAD as a coenzyme and as the energy source for the reaction. It is essential for DNA replication and repair of damaged DNA. This is DNA ligase from Shewanella oneidensis (strain ATCC 700550 / JCM 31522 / CIP 106686 / LMG 19005 / NCIMB 14063 / MR-1).